A 206-amino-acid polypeptide reads, in one-letter code: Imidazole glycerol phosphate synthase subunit HisH (206 aa).

Positions 5-206 constitute a Glutamine amidotransferase type-1 domain; that stretch reads SVVVLDYGSG…AVLRNWIERL (202 aa). Catalysis depends on cysteine 83, which acts as the Nucleophile. Residues histidine 187 and glutamate 189 contribute to the active site.

As to quaternary structure, heterodimer of HisH and HisF.

The protein resides in the cytoplasm. It catalyses the reaction 5-[(5-phospho-1-deoxy-D-ribulos-1-ylimino)methylamino]-1-(5-phospho-beta-D-ribosyl)imidazole-4-carboxamide + L-glutamine = D-erythro-1-(imidazol-4-yl)glycerol 3-phosphate + 5-amino-1-(5-phospho-beta-D-ribosyl)imidazole-4-carboxamide + L-glutamate + H(+). It carries out the reaction L-glutamine + H2O = L-glutamate + NH4(+). It functions in the pathway amino-acid biosynthesis; L-histidine biosynthesis; L-histidine from 5-phospho-alpha-D-ribose 1-diphosphate: step 5/9. In terms of biological role, IGPS catalyzes the conversion of PRFAR and glutamine to IGP, AICAR and glutamate. The HisH subunit catalyzes the hydrolysis of glutamine to glutamate and ammonia as part of the synthesis of IGP and AICAR. The resulting ammonia molecule is channeled to the active site of HisF. The sequence is that of Imidazole glycerol phosphate synthase subunit HisH from Mycolicibacterium paratuberculosis (strain ATCC BAA-968 / K-10) (Mycobacterium paratuberculosis).